The sequence spans 443 residues: MYGDYRQIWERIVEVIKSELTPTSYNTWLVHIKPLAFAEDTLFLSTPNTFTKNIINGRYINIIYDAASKVTNRFIEIKILSEDEEEYREIKESIERENSSESTLLSTLNPKYTFDTFVVGNSNKLAHAACLAVAQSPAKAYNPLFIYGGVGLGKTHLMHAIGHFINKNHAGYKIMYVTSETFTNELVNSIKDDKNEEFRNKYRNIDVLLIDDIQFIANKERTQEEFFHTFNTLYEANKQIVISSDRPPKEIPTLEERLRSRFEWGLIADIQPPDYETRVAILKKKAQSENLNIPDEVLAYVAEKIQSNIRELEGALIRIVAFATLTKSNIDLELTKHALKDIVSNKTREITVKLIQEEVCKYYNIKLEDFRSRKRTKNIAYPRQIAMYLARELTDLSLPKIGEEFGKDHTTVIHAYEKISNEIKQDESLARQIEELKKRIKGY.

A domain I, interacts with DnaA modulators region spans residues 1-73 (MYGDYRQIWE…YDAASKVTNR (73 aa)). The interval 73-106 (RFIEIKILSEDEEEYREIKESIERENSSESTLLS) is domain II. The interval 107 to 323 (TLNPKYTFDT…GALIRIVAFA (217 aa)) is domain III, AAA+ region. Residues glycine 151, glycine 153, lysine 154, and threonine 155 each coordinate ATP. The segment at 324-443 (TLTKSNIDLE…EELKKRIKGY (120 aa)) is domain IV, binds dsDNA.

This sequence belongs to the DnaA family. Oligomerizes as a right-handed, spiral filament on DNA at oriC.

It is found in the cytoplasm. In terms of biological role, plays an essential role in the initiation and regulation of chromosomal replication. ATP-DnaA binds to the origin of replication (oriC) to initiate formation of the DNA replication initiation complex once per cell cycle. Binds the DnaA box (a 9 base pair repeat at the origin) and separates the double-stranded (ds)DNA. Forms a right-handed helical filament on oriC DNA; dsDNA binds to the exterior of the filament while single-stranded (ss)DNA is stabiized in the filament's interior. The ATP-DnaA-oriC complex binds and stabilizes one strand of the AT-rich DNA unwinding element (DUE), permitting loading of DNA polymerase. After initiation quickly degrades to an ADP-DnaA complex that is not apt for DNA replication. Binds acidic phospholipids. This Caldanaerobacter subterraneus subsp. tengcongensis (strain DSM 15242 / JCM 11007 / NBRC 100824 / MB4) (Thermoanaerobacter tengcongensis) protein is Chromosomal replication initiator protein DnaA.